The sequence spans 38 residues: Photosystem II reaction center protein L (38 aa).

The chain crosses the membrane as a helical span at residues 17-37 (SLYWGLLLIFVLAVLFSNYSF).

This sequence belongs to the PsbL family. PSII is composed of 1 copy each of membrane proteins PsbA, PsbB, PsbC, PsbD, PsbE, PsbF, PsbH, PsbI, PsbJ, PsbK, PsbL, PsbM, PsbT, PsbX, PsbY, PsbZ, Psb30/Ycf12, at least 3 peripheral proteins of the oxygen-evolving complex and a large number of cofactors. It forms dimeric complexes.

Its subcellular location is the plastid. The protein resides in the chloroplast thylakoid membrane. Its function is as follows. One of the components of the core complex of photosystem II (PSII). PSII is a light-driven water:plastoquinone oxidoreductase that uses light energy to abstract electrons from H(2)O, generating O(2) and a proton gradient subsequently used for ATP formation. It consists of a core antenna complex that captures photons, and an electron transfer chain that converts photonic excitation into a charge separation. This subunit is found at the monomer-monomer interface and is required for correct PSII assembly and/or dimerization. The chain is Photosystem II reaction center protein L from Bowenia serrulata (Byfield fern).